A 354-amino-acid chain; its full sequence is MTELKNDRYLRALLRQPVDVTPVWMMRQAGRYLPEYKATRAQAGDFMSLCKNAELACEVTLQPLRRYPLDAAILFSDILTIPDAMGLGLYFEAGEGPRFTAPVTCKADVDKLPIPDPEDELGYVMNAVRTIRRELKGEVPLIGFSGSPWTLATYMVEGGSSKAFTVIKKMMYADPQALHLLLDKLAKSVTLYLNAQIKAGAQSVMIFDTWGGVLTGRDYQQFSLYYMHKIVDGLLRENDGRRVPVTLFTKGGGQWLEAMAETGCDALGLDWTTDIADARRRVGHKVALQGNMDPSMLYAPPARIEDEVATILAGFGQGEGHVFNLGHGIHQDVPPEHAGAFVEAVHRLSAQYHN.

Substrate contacts are provided by residues 27–31 (RQAGR), Phe-46, Asp-77, Tyr-154, Thr-209, and His-327.

This sequence belongs to the uroporphyrinogen decarboxylase family. In terms of assembly, homodimer.

It localises to the cytoplasm. The catalysed reaction is uroporphyrinogen III + 4 H(+) = coproporphyrinogen III + 4 CO2. It functions in the pathway porphyrin-containing compound metabolism; protoporphyrin-IX biosynthesis; coproporphyrinogen-III from 5-aminolevulinate: step 4/4. Catalyzes the decarboxylation of four acetate groups of uroporphyrinogen-III to yield coproporphyrinogen-III. The protein is Uroporphyrinogen decarboxylase of Salmonella typhi.